The primary structure comprises 555 residues: Solute carrier family 22 member 2 (555 aa).

Residues 1–21 (MPTTVDDVLEHGGEFHFFQKQ) lie on the Cytoplasmic side of the membrane. Residues 22–42 (MFFLLALLSATFTPIYVGIVF) traverse the membrane as a helical segment. Residues 43 to 150 (LGFTPDHRCR…LVCANSWMLD (108 aa)) are Extracellular-facing. Asn72 is a glycosylation site (N-linked (GlcNAc...) asparagine). A helical membrane pass occupies residues 151 to 171 (LFQASVNVGFFFGSVSIGYIA). The Cytoplasmic portion of the chain corresponds to 172–177 (DRFGRK). A helical transmembrane segment spans residues 178–198 (LCLLTTVLINAAAGVLMAISP). At 199–210 (TYTWMLIFRLIQ) the chain is on the extracellular side. Residues 211–231 (GLVSKAGWLIGYILITEFVGR) traverse the membrane as a helical segment. Residues 232–238 (RYRRTVG) are Cytoplasmic-facing. The chain crosses the membrane as a helical span at residues 239 to 259 (IFYQVAYTVGLLVLAGVAYAL). Residues 260–263 (PHWR) lie on the Extracellular side of the membrane. A helical transmembrane segment spans residues 264-284 (WLQFTVTLPNFFFLLYYWCIP). Positions 284-288 (PESPR) match the Proline-rich sequence motif. At 285-348 (ESPRWLISQN…VRTPQIRKHT (64 aa)) the chain is on the cytoplasmic side. The helical transmembrane segment at 349-369 (MILMYNWFTSSVLYQGLIMHM) threads the bilayer. Residues 370–375 (GLAGDN) lie on the Extracellular side of the membrane. Residues 376 to 396 (IYLDFFYSALVEFPAAFMIIV) traverse the membrane as a helical segment. The Cytoplasmic portion of the chain corresponds to 397–404 (TIDRIGRR). Residues 405 to 425 (YPWAASNMVAGAACLASVFIP) traverse the membrane as a helical segment. Over 426–432 (GDLQWLK) the chain is Extracellular. Residues 433–453 (IIISCLGRMGITMAYEIVRLV) form a helical membrane-spanning segment. The Cytoplasmic portion of the chain corresponds to 454-464 (NAELYPTFIRN). A helical membrane pass occupies residues 465–485 (LGVHICSSMCDIGGIITPFLV). Residues 486–494 (YRLTNIWLE) lie on the Extracellular side of the membrane. Residues 495-515 (LPLMVFGVLGLVAGGLVLLLP) form a helical membrane-spanning segment. The Cytoplasmic portion of the chain corresponds to 516 to 555 (ETKGKALPETIEEAENMQRPRKNKEKMIYLQVQKLDIPLN).

It belongs to the major facilitator (TC 2.A.1) superfamily. Organic cation transporter (TC 2.A.1.19) family. Tyrosine phosphorylated.

The protein localises to the basolateral cell membrane. It is found in the basal cell membrane. It localises to the apical cell membrane. The catalysed reaction is (R)-noradrenaline(out) = (R)-noradrenaline(in). It catalyses the reaction (R)-adrenaline(out) = (R)-adrenaline(in). The enzyme catalyses serotonin(out) = serotonin(in). It carries out the reaction dopamine(out) = dopamine(in). The catalysed reaction is histamine(out) = histamine(in). It catalyses the reaction thiamine(in) = thiamine(out). The enzyme catalyses creatinine(in) = creatinine(out). It carries out the reaction 1-methylnicotinamide(out) = 1-methylnicotinamide(in). The catalysed reaction is guanidine(out) = guanidine(in). It catalyses the reaction choline(out) = choline(in). The enzyme catalyses agmatine(out) = agmatine(in). It carries out the reaction putrescine(out) = putrescine(in). The catalysed reaction is spermidine(in) = spermidine(out). It catalyses the reaction tyramine(in) = tyramine(out). The enzyme catalyses L-histidyl-L-proline diketopiperazine(in) = L-histidyl-L-proline diketopiperazine(out). It carries out the reaction (R)-salsolinol(in) = (R)-salsolinol(out). The catalysed reaction is N-methyl-(R)-salsolinol(in) = N-methyl-(R)-salsolinol(out). It catalyses the reaction acetylcholine(in) = acetylcholine(out). The enzyme catalyses prostaglandin F2alpha(out) = prostaglandin F2alpha(in). It carries out the reaction prostaglandin E2(out) = prostaglandin E2(in). With respect to regulation, tyrosine phosphorylation of the transporter leads to activation of the transport activity. Inhibited by cGMP, most likely through a cGMP-binding protein that interacts with OCT2. Electrogenic voltage-dependent transporter that mediates the transport of a variety of organic cations such as endogenous bioactive amines, cationic drugs and xenobiotics. Functions as a Na(+)-independent, bidirectional uniporter. Cation cellular uptake or release is driven by the electrochemical potential, i.e. membrane potential and concentration gradient. However, may also engage electroneutral cation exchange when saturating concentrations of cation substrates are reached. Predominantly expressed at the basolateral membrane of hepatocytes and proximal tubules and involved in the uptake and disposition of cationic compounds by hepatic and renal clearance from the blood flow. Implicated in monoamine neurotransmitters uptake such as histamine, dopamine, adrenaline/epinephrine, noradrenaline/norepinephrine, serotonin and tyramine, thereby supporting a physiological role in the central nervous system by regulating interstitial concentrations of neurotransmitters. Also capable of transporting dopaminergic neuromodulators cyclo(his-pro), salsolinol and N-methyl-salsolinol, thereby involved in the maintenance of dopaminergic cell integrity in the central nervous system. Mediates the bidirectional transport of acetylcholine (ACh) at the apical membrane of ciliated cell in airway epithelium, thereby playing a role in luminal release of ACh from bronchial epithelium. Also transports guanidine and endogenous monoamines such as vitamin B1/thiamine, creatinine and N-1-methylnicotinamide (NMN). Mediates the uptake and efflux of quaternary ammonium compound choline. Mediates the bidirectional transport of polyamine agmatine and the uptake of polyamines putrescine and spermidine. Able to transport non-amine endogenous compounds such as prostaglandin E2 (PGE2) and prostaglandin F2-alpha (PGF2-alpha). Also involved in the uptake of xenobiotic 4-(4-(dimethylamino)styryl)-N-methylpyridinium (ASP). May contribute to regulate the transport of organic compounds in testis across the blood-testis-barrier. This chain is Solute carrier family 22 member 2 (SLC22A2), found in Pongo abelii (Sumatran orangutan).